The primary structure comprises 253 residues: Proteasome subunit alpha type-7 (253 aa).

The protein belongs to the peptidase T1A family. The 26S proteasome consists of a 20S proteasome core and two 19S regulatory subunits. The 20S proteasome core is composed of 28 subunits that are arranged in four stacked rings, resulting in a barrel-shaped structure. The two end rings are each formed by seven alpha subunits, and the two central rings are each formed by seven beta subunits. The catalytic chamber with the active sites is on the inside of the barrel.

The protein localises to the cytoplasm. The protein resides in the nucleus. In terms of biological role, the proteasome is a multicatalytic proteinase complex which is characterized by its ability to cleave peptides with Arg, Phe, Tyr, Leu, and Glu adjacent to the leaving group at neutral or slightly basic pH. The proteasome has an ATP-dependent proteolytic activity. This is Proteasome subunit alpha type-7 (pas-4) from Caenorhabditis elegans.